The primary structure comprises 116 residues: Large ribosomal subunit protein bL19 (116 aa).

Belongs to the bacterial ribosomal protein bL19 family.

This protein is located at the 30S-50S ribosomal subunit interface and may play a role in the structure and function of the aminoacyl-tRNA binding site. In Clostridium botulinum (strain Eklund 17B / Type B), this protein is Large ribosomal subunit protein bL19.